The primary structure comprises 160 residues: V-type proton ATPase subunit c (160 aa).

Residues 1–8 (MTELCPVY) lie on the Vacuolar side of the membrane. The chain crosses the membrane as a helical span at residues 9-31 (APFFGAIGCASAIIFTSLGAAYG). Over 32 to 53 (TAKSGVGICATCVLRPDLLFKN) the chain is Cytoplasmic. Residues 54–74 (IVPVIMAGIIAIYGLVVSVLV) traverse the membrane as a helical segment. The Vacuolar segment spans residues 75–90 (CYSLGQKQALYTGFIQ). The chain crosses the membrane as a helical span at residues 91–112 (LGAGLSVGLSGLAAGFAIGIVG). The Cytoplasmic segment spans residues 113–124 (DAGVRGSSQQPR). The helical transmembrane segment at 125–150 (LFVGMILILIFAEVLGLYGLIVALLL) threads the bilayer. Residues 151 to 160 (NSRATQDVVC) are Vacuolar-facing.

This sequence belongs to the V-ATPase proteolipid subunit family. In terms of assembly, V-ATPase is a heteromultimeric enzyme composed of a peripheral catalytic V1 complex (components A to H) attached to an integral membrane V0 proton pore complex (components: a, c, c', c'', d, e, f and VOA1). The decameric c-ring forms the proton-conducting pore, and is composed of eight proteolipid subunits c, one subunit c' and one subunit c''.

Its subcellular location is the vacuole membrane. Its function is as follows. Proton-conducting pore forming subunit of the V0 complex of vacuolar(H+)-ATPase (V-ATPase), a multisubunit enzyme composed of a peripheral complex (V1) that hydrolyzes ATP and a membrane integral complex (V0) that translocates protons. V-ATPase is responsible for acidifying and maintaining the pH of intracellular compartments. This is V-type proton ATPase subunit c (VMA3) from Saccharomyces cerevisiae (strain ATCC 204508 / S288c) (Baker's yeast).